Reading from the N-terminus, the 128-residue chain is Fluoride-specific ion channel FluC (128 aa).

The next 4 helical transmembrane spans lie at Phe2–Leu22, Leu35–Phe55, Leu67–Val87, and Phe96–Leu116. 2 residues coordinate Na(+): Gly75 and Thr78.

The protein belongs to the fluoride channel Fluc/FEX (TC 1.A.43) family.

It localises to the cell inner membrane. It carries out the reaction fluoride(in) = fluoride(out). Na(+) is not transported, but it plays an essential structural role and its presence is essential for fluoride channel function. In terms of biological role, fluoride-specific ion channel. Important for reducing fluoride concentration in the cell, thus reducing its toxicity. The polypeptide is Fluoride-specific ion channel FluC (Burkholderia cenocepacia (strain ATCC BAA-245 / DSM 16553 / LMG 16656 / NCTC 13227 / J2315 / CF5610) (Burkholderia cepacia (strain J2315))).